The primary structure comprises 216 residues: 3-isopropylmalate dehydratase small subunit (216 aa).

This sequence belongs to the LeuD family. LeuD type 1 subfamily. Heterodimer of LeuC and LeuD.

The enzyme catalyses (2R,3S)-3-isopropylmalate = (2S)-2-isopropylmalate. Its pathway is amino-acid biosynthesis; L-leucine biosynthesis; L-leucine from 3-methyl-2-oxobutanoate: step 2/4. In terms of biological role, catalyzes the isomerization between 2-isopropylmalate and 3-isopropylmalate, via the formation of 2-isopropylmaleate. The chain is 3-isopropylmalate dehydratase small subunit from Acinetobacter baylyi (strain ATCC 33305 / BD413 / ADP1).